We begin with the raw amino-acid sequence, 128 residues long: Ribosome-binding factor A (128 aa).

Belongs to the RbfA family. Monomer. Binds 30S ribosomal subunits, but not 50S ribosomal subunits or 70S ribosomes.

Its subcellular location is the cytoplasm. In terms of biological role, one of several proteins that assist in the late maturation steps of the functional core of the 30S ribosomal subunit. Associates with free 30S ribosomal subunits (but not with 30S subunits that are part of 70S ribosomes or polysomes). Required for efficient processing of 16S rRNA. May interact with the 5'-terminal helix region of 16S rRNA. The protein is Ribosome-binding factor A of Geobacillus thermodenitrificans (strain NG80-2).